The primary structure comprises 211 residues: Small ribosomal subunit protein uS3 (211 aa).

The KH type-2 domain occupies 39 to 107; the sequence is VTKYVESSFA…VPSLNVVEVK (69 aa).

It belongs to the universal ribosomal protein uS3 family. In terms of assembly, part of the 30S ribosomal subunit. Forms a tight complex with proteins S10 and S14.

Binds the lower part of the 30S subunit head. Binds mRNA in the 70S ribosome, positioning it for translation. In Neorickettsia sennetsu (strain ATCC VR-367 / Miyayama) (Ehrlichia sennetsu), this protein is Small ribosomal subunit protein uS3.